The primary structure comprises 72 residues: Cell division protein ZapB (72 aa).

Residues 1–72 adopt a coiled-coil conformation; the sequence is MSLEILDQLE…RSLLGKIDNV (72 aa). Positions 33-57 are disordered; the sequence is KNNQSQQANDALRSENEQLKSEHQN. Basic and acidic residues predominate over residues 44–57; the sequence is LRSENEQLKSEHQN.

The protein belongs to the ZapB family. In terms of assembly, homodimer. The ends of the coiled-coil dimer bind to each other, forming polymers. Interacts with FtsZ.

The protein localises to the cytoplasm. In terms of biological role, non-essential, abundant cell division factor that is required for proper Z-ring formation. It is recruited early to the divisome by direct interaction with FtsZ, stimulating Z-ring assembly and thereby promoting cell division earlier in the cell cycle. Its recruitment to the Z-ring requires functional FtsA or ZipA. This Pasteurella multocida (strain Pm70) protein is Cell division protein ZapB.